Reading from the N-terminus, the 137-residue chain is Histone H2B (137 aa).

A compositionally biased stretch (basic and acidic residues) spans 1-10; it reads MAPKAADKKP. The interval 1-46 is disordered; that stretch reads MAPKAADKKPASKAPATASKAPEKKDAGKKTAASGDKKKRSKSRKE. 2 positions are modified to N6-acetyllysine; alternate: K8 and K9. Residues K8 and K9 each participate in a glycyl lysine isopeptide (Lys-Gly) (interchain with G-Cter in SUMO); alternate cross-link. S12 bears the Phosphoserine mark. K13 carries the post-translational modification N6-acetyllysine. Position 24 is an N6-acetyllysine; alternate (K24). K24 participates in a covalent cross-link: Glycyl lysine isopeptide (Lys-Gly) (interchain with G-Cter in SUMO); alternate. K25 is covalently cross-linked (Glycyl lysine isopeptide (Lys-Gly) (interchain with G-Cter in SUMO)). A Glycyl lysine isopeptide (Lys-Gly) (interchain with G-Cter in ubiquitin) cross-link involves residue K131.

Belongs to the histone H2B family. As to quaternary structure, the nucleosome is a histone octamer containing two molecules each of H2A, H2B, H3 and H4 assembled in one H3-H4 heterotetramer and two H2A-H2B heterodimers. The octamer wraps approximately 147 bp of DNA. In terms of processing, monoubiquitinated by the UBC2-BRE1 complex to form H2BK123ub1. H2BK123ub1 gives a specific tag for epigenetic transcriptional activation and is also prerequisite for H3K4me and H3K79me formation. H2BK123ub1 also modulates the formation of double-strand breaks during meiosis and is a prerequisite for DNA-damage checkpoint activation. Post-translationally, phosphorylated to form H2BS10ph during progression through meiotic prophase. May be correlated with chromosome condensation. Acetylated by GCN5 to form H2BK11ac and H2BK16ac. H2BK16ac can also be formed by ESA1. Acetylation of N-terminal lysines and particularly formation of H2BK11acK16ac has a positive effect on transcription. In terms of processing, sumoylation to form H2BK6su or H2BK7su, and probably also H2BK16su or H2BK17su, occurs preferentially near the telomeres and represses gene transcription.

Its subcellular location is the nucleus. It localises to the chromosome. Its function is as follows. Core component of nucleosome. Nucleosomes wrap and compact DNA into chromatin, limiting DNA accessibility to the cellular machineries which require DNA as a template. Histones thereby play a central role in transcription regulation, DNA repair, DNA replication and chromosomal stability. DNA accessibility is regulated via a complex set of post-translational modifications of histones, also called histone code, and nucleosome remodeling. This is Histone H2B (HTB1) from Gibberella zeae (strain ATCC MYA-4620 / CBS 123657 / FGSC 9075 / NRRL 31084 / PH-1) (Wheat head blight fungus).